Consider the following 524-residue polypeptide: Probable pectinesterase/pectinesterase inhibitor 42 (524 aa).

Positions 1–22 (MLVKVFSFFILMITMVVIGVSK) are cleaved as a signal peptide. The pectinesterase inhibitor 42 stretch occupies residues 23–172 (EYCDDKHSCQ…ISKAKVALAL (150 aa)). The interval 215-510 (DVVVAKDGTG…FTVAKLLDGE (296 aa)) is pectinesterase 42. Residues Asn265 and Asn281 are each glycosylated (N-linked (GlcNAc...) asparagine). Thr290 provides a ligand contact to substrate. Asp343 functions as the Proton donor; for pectinesterase activity in the catalytic mechanism. The cysteines at positions 357 and 377 are disulfide-linked. Asp364 serves as the catalytic Nucleophile; for pectinesterase activity. A glycan (N-linked (GlcNAc...) asparagine) is linked at Asn412. Arg430 and Trp432 together coordinate substrate.

In the N-terminal section; belongs to the PMEI family. This sequence in the C-terminal section; belongs to the pectinesterase family. Expressed in siliques but not in flower buds.

The protein resides in the secreted. It localises to the cell wall. It catalyses the reaction [(1-&gt;4)-alpha-D-galacturonosyl methyl ester](n) + n H2O = [(1-&gt;4)-alpha-D-galacturonosyl](n) + n methanol + n H(+). It functions in the pathway glycan metabolism; pectin degradation; 2-dehydro-3-deoxy-D-gluconate from pectin: step 1/5. Functionally, acts in the modification of cell walls via demethylesterification of cell wall pectin. In Arabidopsis thaliana (Mouse-ear cress), this protein is Probable pectinesterase/pectinesterase inhibitor 42 (PME42).